Here is a 332-residue protein sequence, read N- to C-terminus: Adenine deaminase (332 aa).

Zn(2+) is bound by residues histidine 16, histidine 18, and histidine 196. The Proton donor role is filled by glutamate 199. Residue aspartate 277 coordinates Zn(2+). Residue aspartate 278 participates in substrate binding.

This sequence belongs to the metallo-dependent hydrolases superfamily. Adenosine and AMP deaminases family. Adenine deaminase type 2 subfamily. The cofactor is Zn(2+).

It carries out the reaction adenine + H2O + H(+) = hypoxanthine + NH4(+). Catalyzes the hydrolytic deamination of adenine to hypoxanthine. Plays an important role in the purine salvage pathway and in nitrogen catabolism. The polypeptide is Adenine deaminase (Acinetobacter baylyi (strain ATCC 33305 / BD413 / ADP1)).